The sequence spans 401 residues: Multidrug resistance protein MdtH (401 aa).

11 helical membrane passes run 13 to 33 (YFLL…FPLI), 34 to 54 (SIRF…ALGL), 99 to 116 (PWIL…GTLF), 139 to 159 (LLMM…SWLL), 165 to 185 (FVCW…AWLL), 214 to 234 (VLTL…LPIV), 243 to 263 (AAVK…LYPL), 277 to 297 (LMAG…ITHL), 299 to 319 (TLFM…PARE), 340 to 360 (LGLA…YDTG), and 368 to 388 (LPWF…YWQF).

Belongs to the major facilitator superfamily. DHA1 family. MdtH (TC 2.A.1.2.21) subfamily.

It is found in the cell inner membrane. This chain is Multidrug resistance protein MdtH, found in Yersinia pseudotuberculosis serotype O:1b (strain IP 31758).